The primary structure comprises 426 residues: MKLRRSVEKLKGTIRVPGDKSISHRSIIFGSLAKGVTRFHNILRGEDVLSTMQVFRDLGVKIEDNGDIVEVHGVGFDGLQAPKNDLDMGNSGTSIRLISGVLAGQDFEATMFGDDSLSKRPMDRVTIPLSQMGLKISGQTERDLPPLTIKGNKNLKPIRYQLPVASAQVKSALIFAALQAEGNSVIVKKDLTRNHTEDMIVQFGGQLKFNGKEIRIQGGQEFIAQEITVPGDISSAAFWLVAGLIIPGSKIVLENVGINETRTGILDVIKAMGGKMTLSNIDELAKSATITVETSELKATEIAGELIPRLIDELPIITLLATQAHGTTIICDAEELKVKETDCIQVVADALNSMGATIEPTEDGMIIHGPTALHGAEINTFGDHRIGMMTAIAALLAKDGEVVLERAEAINTSYPAFFEHLNSLMD.

3-phosphoshikimate contacts are provided by Lys-20, Ser-21, and Arg-25. Lys-20 provides a ligand contact to phosphoenolpyruvate. Phosphoenolpyruvate is bound by residues Gly-92 and Arg-120. 3-phosphoshikimate contacts are provided by Ser-166, Gln-168, Asp-312, and Lys-339. Position 168 (Gln-168) interacts with phosphoenolpyruvate. Asp-312 serves as the catalytic Proton acceptor. Arg-385 serves as a coordination point for phosphoenolpyruvate.

Belongs to the EPSP synthase family. Monomer.

Its subcellular location is the cytoplasm. The enzyme catalyses 3-phosphoshikimate + phosphoenolpyruvate = 5-O-(1-carboxyvinyl)-3-phosphoshikimate + phosphate. It functions in the pathway metabolic intermediate biosynthesis; chorismate biosynthesis; chorismate from D-erythrose 4-phosphate and phosphoenolpyruvate: step 6/7. In terms of biological role, catalyzes the transfer of the enolpyruvyl moiety of phosphoenolpyruvate (PEP) to the 5-hydroxyl of shikimate-3-phosphate (S3P) to produce enolpyruvyl shikimate-3-phosphate and inorganic phosphate. The protein is 3-phosphoshikimate 1-carboxyvinyltransferase of Streptococcus suis (strain 98HAH33).